Consider the following 307-residue polypeptide: Elongation factor Ts (307 aa).

The involved in Mg(2+) ion dislocation from EF-Tu stretch occupies residues 80-83 (TDFV).

The protein belongs to the EF-Ts family.

Its subcellular location is the cytoplasm. Functionally, associates with the EF-Tu.GDP complex and induces the exchange of GDP to GTP. It remains bound to the aminoacyl-tRNA.EF-Tu.GTP complex up to the GTP hydrolysis stage on the ribosome. In Bradyrhizobium diazoefficiens (strain JCM 10833 / BCRC 13528 / IAM 13628 / NBRC 14792 / USDA 110), this protein is Elongation factor Ts.